The chain runs to 578 residues: Monooxygenase cfoE (578 aa).

Residues 549–569 (IVLSGVPLVVFGSLHLVLWIF) traverse the membrane as a helical segment.

The protein belongs to the FMO family. Requires FAD as cofactor.

It localises to the membrane. It participates in secondary metabolite biosynthesis; flavonoid biosynthesis. Its function is as follows. Monooxygenase; part of the gene cluster that mediates the biosynthesis of chlorflavonin, a fungal flavonoid with acetolactate synthase inhibitory activity. Within the pathway, cfoE is responsible for the chlorination of the flavonoid skeleton at position C3'. The pathway begins with the PKS-NRPS hybrid synthetase cfoA that uses benzoic acid or p-hydroxybenzoic acid as a starter unit with four rounds of chain elongation using malonyl-CoA to form the chalcone skeleton. Then, a new type of chalcone isomerase, cfoK, catalyzes the conversion of the chalcone into a flavanone by a histidine-mediated oxa-Michael addition mechanism. The desaturation of flavanone to flavone is catalyzed by a new type of flavone synthase, the flavin mononucleotide (FMN)-dependent oxidoreductase cfoJ. Monooxygenases cfoF, cfoG, and P450 cfoH are responsible for the hydroxylation of the flavonoid skeleton at sites C3, C8, and C2', respectively. Like cfoF, the dehydratase cfoI plays also a role in the hydroxylation of position C3. Methyltransferases cfoB, cfoC, and cfoD then catalyze the methylation of C7-OH, C8-OH, and C3-OH, respectively. Finally, the monooxygenase cfoE is responsible for the chlorination of flavonoid at position C3'. The protein is Monooxygenase cfoE of Aspergillus candidus.